The primary structure comprises 187 residues: Elongation factor P (187 aa).

This sequence belongs to the elongation factor P family.

The protein resides in the cytoplasm. It participates in protein biosynthesis; polypeptide chain elongation. Its function is as follows. Involved in peptide bond synthesis. Stimulates efficient translation and peptide-bond synthesis on native or reconstituted 70S ribosomes in vitro. Probably functions indirectly by altering the affinity of the ribosome for aminoacyl-tRNA, thus increasing their reactivity as acceptors for peptidyl transferase. The protein is Elongation factor P of Tolumonas auensis (strain DSM 9187 / NBRC 110442 / TA 4).